The following is a 444-amino-acid chain: Phosphoribosylamine--glycine ligase (444 aa).

One can recognise an ATP-grasp domain in the interval Arg-109 to Glu-324. Met-140 to Thr-202 provides a ligand contact to ATP. Residues Gln-282, Glu-294, and Asn-296 each contribute to the Mg(2+) site. Positions 282, 294, and 296 each coordinate Mn(2+).

The protein belongs to the GARS family. It depends on Mg(2+) as a cofactor. Requires Mn(2+) as cofactor.

The catalysed reaction is 5-phospho-beta-D-ribosylamine + glycine + ATP = N(1)-(5-phospho-beta-D-ribosyl)glycinamide + ADP + phosphate + H(+). It functions in the pathway purine metabolism; IMP biosynthesis via de novo pathway; N(1)-(5-phospho-D-ribosyl)glycinamide from 5-phospho-alpha-D-ribose 1-diphosphate: step 2/2. The chain is Phosphoribosylamine--glycine ligase from Methanococcus maripaludis (strain C5 / ATCC BAA-1333).